Reading from the N-terminus, the 550-residue chain is Arginine--tRNA ligase (550 aa).

The 'HIGH' region motif lies at 130–140 (ANPTGPIHLGG).

Belongs to the class-I aminoacyl-tRNA synthetase family. As to quaternary structure, monomer.

The protein localises to the cytoplasm. The catalysed reaction is tRNA(Arg) + L-arginine + ATP = L-arginyl-tRNA(Arg) + AMP + diphosphate. This chain is Arginine--tRNA ligase, found in Corynebacterium glutamicum (strain R).